Here is a 235-residue protein sequence, read N- to C-terminus: 7-cyano-7-deazaguanine synthase (235 aa).

Residue 13 to 23 (FSGGLDSTTCL) participates in ATP binding. The Zn(2+) site is built by cysteine 197, cysteine 207, cysteine 210, and cysteine 213.

Belongs to the QueC family. It depends on Zn(2+) as a cofactor.

It carries out the reaction 7-carboxy-7-deazaguanine + NH4(+) + ATP = 7-cyano-7-deazaguanine + ADP + phosphate + H2O + H(+). The protein operates within purine metabolism; 7-cyano-7-deazaguanine biosynthesis. Functionally, catalyzes the ATP-dependent conversion of 7-carboxy-7-deazaguanine (CDG) to 7-cyano-7-deazaguanine (preQ(0)). In Solidesulfovibrio magneticus (strain ATCC 700980 / DSM 13731 / RS-1) (Desulfovibrio magneticus), this protein is 7-cyano-7-deazaguanine synthase.